The sequence spans 32 residues: Dermatoxin-J2 (32 aa).

Q32 is subject to Glutamine amide.

In terms of tissue distribution, expressed by the skin glands.

The protein resides in the secreted. Functionally, antimicrobial peptide. In Phasmahyla jandaia (Jandaia leaf frog), this protein is Dermatoxin-J2.